The following is a 288-amino-acid chain: ATP synthase gamma chain (288 aa).

This sequence belongs to the ATPase gamma chain family. F-type ATPases have 2 components, CF(1) - the catalytic core - and CF(0) - the membrane proton channel. CF(1) has five subunits: alpha(3), beta(3), gamma(1), delta(1), epsilon(1). CF(0) has three main subunits: a, b and c.

The protein localises to the cell membrane. Its function is as follows. Produces ATP from ADP in the presence of a proton gradient across the membrane. The gamma chain is believed to be important in regulating ATPase activity and the flow of protons through the CF(0) complex. The polypeptide is ATP synthase gamma chain (Staphylococcus epidermidis (strain ATCC 35984 / DSM 28319 / BCRC 17069 / CCUG 31568 / BM 3577 / RP62A)).